Consider the following 473-residue polypeptide: Serine incorporator 3 (473 aa).

The Extracellular segment spans residues 1 to 96; it reads MGAVLGVFSL…KDCDVLVGYK (96 aa). Residue N34 is glycosylated (N-linked (GlcNAc...) asparagine). Residues 97–117 form a helical membrane-spanning segment; it reads AVYRISFAMAIFFFVFSLLMF. The Cytoplasmic segment spans residues 118 to 132; it reads KVKTSKDLRAAVHNG. Residues 133–153 form a helical membrane-spanning segment; it reads FWFFKIAALIGIMVGSFYIPG. Over 154–159 the chain is Extracellular; sequence GYFSSV. A helical transmembrane segment spans residues 160 to 180; sequence WFVVGMIGAALFILIQLVLLV. Residues 181–203 are Cytoplasmic-facing; that stretch reads DFAHSWNESWVNRMEEGNPRLWY. Residues 204-224 form a helical membrane-spanning segment; it reads AALLSFTSAFYILSIICVGLL. The Extracellular portion of the chain corresponds to 225-239; sequence YTYYTKPDGCTENKF. A helical transmembrane segment spans residues 240 to 260; the sequence is FISINLILCVVASIISIHPKI. Residues 261-329 are Cytoplasmic-facing; the sequence is QEHQPRSGLL…VPTPTPPSKS (69 aa). A helical membrane pass occupies residues 330 to 350; that stretch reads GSLLDSDNFIGLFVFVLCLLY. Topologically, residues 351 to 406 are extracellular; it reads SSIRTSTNSQVDKLTLSGSDSVILGDTTTSGASDEEDGQPRRAVDNEKEGVQYSYS. Position 371 is a phosphoserine (S371). Residues 407 to 427 form a helical membrane-spanning segment; that stretch reads LFHLMLCLASLYIMMTLTSWY. The Cytoplasmic portion of the chain corresponds to 428–446; it reads SPDAKFQSMTSKWPAVWVK. A helical membrane pass occupies residues 447 to 467; sequence ISSSWVCLLLYVWTLVAPLVL. Over 468–473 the chain is Extracellular; it reads TSRDFS.

This sequence belongs to the TDE1 family. N-glycosylated. In terms of tissue distribution, ubiquitous. Expression levels were increased fourfold to tenfold in lung tumor tissues compared with normal pulmonary tissues.

Its subcellular location is the cell membrane. The protein localises to the golgi apparatus membrane. It is found in the cytoplasm. The protein resides in the perinuclear region. The enzyme catalyses a 1,2-diacyl-sn-glycero-3-phospho-L-serine(in) = a 1,2-diacyl-sn-glycero-3-phospho-L-serine(out). It carries out the reaction a 1,2-diacyl-sn-glycero-3-phosphocholine(in) = a 1,2-diacyl-sn-glycero-3-phosphocholine(out). The catalysed reaction is a 1,2-diacyl-sn-glycero-3-phosphoethanolamine(in) = a 1,2-diacyl-sn-glycero-3-phosphoethanolamine(out). Restriction factor required to restrict infectivity of lentiviruses, such as HIV-1: acts by inhibiting an early step of viral infection. Impairs the penetration of the viral particle into the cytoplasm. Non-ATP-dependent, non-specific lipid transporter for phosphatidylserine, phosphatidylcholine, and phosphatidylethanolamine. Functions as a scramblase that flips lipids in both directions across the membrane. Phospholipid scrambling results in HIV-1 surface exposure of phosphatidylserine and loss of membrane asymmetry, which leads to changes in HIV-1 Env conformation and loss of infectivity. This chain is Serine incorporator 3, found in Homo sapiens (Human).